The following is a 179-amino-acid chain: Shikimate kinase (179 aa).

12–17 (GVGKSK) contacts ATP. S16 contacts Mg(2+). Residues D34, R61, and G83 each contribute to the substrate site. Residue R131 coordinates ATP. Position 147 (R147) interacts with substrate.

It belongs to the shikimate kinase family. In terms of assembly, monomer. Mg(2+) is required as a cofactor.

The protein localises to the cytoplasm. The enzyme catalyses shikimate + ATP = 3-phosphoshikimate + ADP + H(+). It participates in metabolic intermediate biosynthesis; chorismate biosynthesis; chorismate from D-erythrose 4-phosphate and phosphoenolpyruvate: step 5/7. Catalyzes the specific phosphorylation of the 3-hydroxyl group of shikimic acid using ATP as a cosubstrate. The protein is Shikimate kinase of Leptospira borgpetersenii serovar Hardjo-bovis (strain JB197).